Here is a 552-residue protein sequence, read N- to C-terminus: Phosphoribosylaminoimidazole carboxylase (552 aa).

The 188-residue stretch at 108 to 295 folds into the ATP-grasp domain; it reads KQHLQVFKIA…QFEAHLRAIC (188 aa). Residue 134–189 participates in ATP binding; sequence GQEFGYPFVLKSKTLAYDGRGNYVVHQPSEIPTAIKALGDRPLYVEKFVPFSMEIA.

It in the C-terminal section; belongs to the AIR carboxylase family. Class I subfamily.

The enzyme catalyses 5-amino-1-(5-phospho-D-ribosyl)imidazole-4-carboxylate + H(+) = 5-amino-1-(5-phospho-beta-D-ribosyl)imidazole + CO2. It functions in the pathway purine metabolism; IMP biosynthesis via de novo pathway; 5-amino-1-(5-phospho-D-ribosyl)imidazole-4-carboxylate from 5-amino-1-(5-phospho-D-ribosyl)imidazole (carboxylase route): step 1/1. This is Phosphoribosylaminoimidazole carboxylase (ade6) from Schizosaccharomyces pombe (strain 972 / ATCC 24843) (Fission yeast).